We begin with the raw amino-acid sequence, 115 residues long: Variant surface glycoprotein ANTAT 1.8 (115 aa).

The N-linked (GlcNAc...) asparagine glycan is linked to Asn42. A lipid anchor (GPI-anchor amidated aspartate) is attached at Asp92. A propeptide spans 93-115 (removed in mature form); sequence SSILVNKQLALSVVSAAFAALLF.

It localises to the cell membrane. Functionally, VSG forms a coat on the surface of the parasite. The trypanosome evades the immune response of the host by expressing a series of antigenically distinct VSGs from an estimated 1000 VSG genes. The sequence is that of Variant surface glycoprotein ANTAT 1.8 from Trypanosoma brucei brucei.